A 431-amino-acid chain; its full sequence is Enolase (431 aa).

Gln-168 contacts (2R)-2-phosphoglycerate. The Proton donor role is filled by Glu-210. Mg(2+) contacts are provided by Asp-247, Glu-291, and Asp-318. Residues Lys-343, Arg-372, Ser-373, and Lys-394 each contribute to the (2R)-2-phosphoglycerate site. The Proton acceptor role is filled by Lys-343.

It belongs to the enolase family. Component of the RNA degradosome, a multiprotein complex involved in RNA processing and mRNA degradation. Mg(2+) serves as cofactor.

The protein localises to the cytoplasm. It is found in the secreted. The protein resides in the cell surface. The catalysed reaction is (2R)-2-phosphoglycerate = phosphoenolpyruvate + H2O. Its pathway is carbohydrate degradation; glycolysis; pyruvate from D-glyceraldehyde 3-phosphate: step 4/5. Functionally, catalyzes the reversible conversion of 2-phosphoglycerate (2-PG) into phosphoenolpyruvate (PEP). It is essential for the degradation of carbohydrates via glycolysis. This Acinetobacter baumannii (strain AYE) protein is Enolase.